A 473-amino-acid chain; its full sequence is 3-isopropylmalate dehydratase large subunit (473 aa).

Residues 289–319 form a disordered region; it reads TVTWGTTPGQTAGITEPIPDPDDLPEEDRDT. Residues 291-301 are compositionally biased toward polar residues; sequence TWGTTPGQTAG. Residues 307 to 317 are compositionally biased toward acidic residues; the sequence is PDPDDLPEEDR. Positions 348, 408, and 411 each coordinate [4Fe-4S] cluster.

This sequence belongs to the aconitase/IPM isomerase family. LeuC type 1 subfamily. As to quaternary structure, heterodimer of LeuC and LeuD. Requires [4Fe-4S] cluster as cofactor.

The catalysed reaction is (2R,3S)-3-isopropylmalate = (2S)-2-isopropylmalate. It functions in the pathway amino-acid biosynthesis; L-leucine biosynthesis; L-leucine from 3-methyl-2-oxobutanoate: step 2/4. In terms of biological role, catalyzes the isomerization between 2-isopropylmalate and 3-isopropylmalate, via the formation of 2-isopropylmaleate. The sequence is that of 3-isopropylmalate dehydratase large subunit from Halorubrum lacusprofundi (strain ATCC 49239 / DSM 5036 / JCM 8891 / ACAM 34).